A 575-amino-acid chain; its full sequence is Arginine--tRNA ligase (575 aa).

The short motif at 131 to 141 (ANPNGPLHIGH) is the 'HIGH' region element.

The protein belongs to the class-I aminoacyl-tRNA synthetase family.

The protein resides in the cytoplasm. It catalyses the reaction tRNA(Arg) + L-arginine + ATP = L-arginyl-tRNA(Arg) + AMP + diphosphate. This is Arginine--tRNA ligase from Methanobrevibacter smithii (strain ATCC 35061 / DSM 861 / OCM 144 / PS).